Consider the following 114-residue polypeptide: Large ribosomal subunit protein uL22 (114 aa).

This sequence belongs to the universal ribosomal protein uL22 family. In terms of assembly, part of the 50S ribosomal subunit.

Its function is as follows. This protein binds specifically to 23S rRNA; its binding is stimulated by other ribosomal proteins, e.g. L4, L17, and L20. It is important during the early stages of 50S assembly. It makes multiple contacts with different domains of the 23S rRNA in the assembled 50S subunit and ribosome. In terms of biological role, the globular domain of the protein is located near the polypeptide exit tunnel on the outside of the subunit, while an extended beta-hairpin is found that lines the wall of the exit tunnel in the center of the 70S ribosome. The sequence is that of Large ribosomal subunit protein uL22 from Streptococcus thermophilus (strain CNRZ 1066).